The primary structure comprises 363 residues: Adenosine deaminase (363 aa).

Residues His-42 and His-44 each coordinate Zn(2+). A purine D-ribonucleoside-binding positions include 44–46 (HLD), Asp-172, and Gly-201. Positions 170–184 (IGDTGHRAADIKASA) are gating helix loop; regulates binding affinity for substrates and thus substrate selectivity. His-226 is a binding site for Zn(2+). 3 residues coordinate a purine D-ribonucleoside: Glu-229, His-253, and Asp-310. Residue Asp-310 participates in Zn(2+) binding.

The protein belongs to the metallo-dependent hydrolases superfamily. Adenosine and AMP deaminases family. Zn(2+) serves as cofactor.

The enzyme catalyses adenosine + H2O + H(+) = inosine + NH4(+). The catalysed reaction is S-methyl-5'-thioadenosine + H2O + H(+) = S-methyl-5'-thioinosine + NH4(+). The protein operates within purine metabolism; purine nucleoside salvage. With respect to regulation, inhibited by coformycin and methylthiocoformycin (MT-coformycin). Catalyzes the hydrolytic deamination of adenosine to produce inosine. Unlike mammalian adenosine deaminases, also catalyzes the deamination of 5'-methylthioadenosine (MTA), a by-product of polyamine biosynthesis, to produce 5'-methylthioinosine (MTI). Plays an essential role in the purine salvage pathway which allows the parasite to use host cell purines for the synthesis of nucleic acids. This is Adenosine deaminase from Plasmodium knowlesi.